Reading from the N-terminus, the 308-residue chain is Putative hydrolase MT0526 (308 aa).

The disordered stretch occupies residues methionine 1–aspartate 48. The Nucleophile role is filled by aspartate 62. Mg(2+) contacts are provided by aspartate 62, aspartate 64, and aspartate 237. Catalysis depends on aspartate 64, which acts as the Proton donor.

The protein belongs to the HAD-like hydrolase superfamily. SerB family. The cofactor is Mg(2+).

This chain is Putative hydrolase MT0526, found in Mycobacterium tuberculosis (strain CDC 1551 / Oshkosh).